Here is a 506-residue protein sequence, read N- to C-terminus: DEAD-box ATP-dependent RNA helicase CshA (506 aa).

The Q motif signature appears at 2-30 (QNFKELGISDNTVQSLESMGFKEPTPIQK). The Helicase ATP-binding domain occupies 33 to 203 (IPYALQGIDI…QQFMKSPKII (171 aa)). 46–53 (AQTGTGKT) contacts ATP. A DEAD box motif is present at residues 150-153 (DEAD). One can recognise a Helicase C-terminal domain in the interval 214-375 (QIEEFYTIVK…LRPPHRKEVL (162 aa)). Positions 436-506 (EKPLSRKGRN…KGRTFADHQK (71 aa)) are disordered. The segment covering 468 to 480 (KRSKGYSSKKKST) has biased composition (basic residues).

This sequence belongs to the DEAD box helicase family. CshA subfamily. As to quaternary structure, oligomerizes, may be a member of the RNA degradosome.

It localises to the cytoplasm. It carries out the reaction ATP + H2O = ADP + phosphate + H(+). In terms of biological role, DEAD-box RNA helicase possibly involved in RNA degradation. Unwinds dsRNA in both 5'- and 3'-directions, has RNA-dependent ATPase activity. This chain is DEAD-box ATP-dependent RNA helicase CshA, found in Staphylococcus aureus (strain bovine RF122 / ET3-1).